The primary structure comprises 209 residues: Transcription factor atf31 (209 aa).

The segment covering 90-103 (SKSPSIISEASHNS) has biased composition (polar residues). Positions 90–133 (SKSPSIISEASHNSPSRELDDSGDENTSKLTGTKQSMLKARNRQ) are disordered. Residues 121 to 184 (GTKQSMLKAR…IKLRTLVFAH (64 aa)) form the bZIP domain. The basic motif stretch occupies residues 123 to 161 (KQSMLKARNRQAAQKCRIKKKKYLQTLQDQVNYYTSENK). Residues 163–177 (LLQSANDLREEIIKL) form a leucine-zipper region.

This sequence belongs to the bZIP family.

It is found in the nucleus. The chain is Transcription factor atf31 (atf31) from Schizosaccharomyces pombe (strain 972 / ATCC 24843) (Fission yeast).